Consider the following 469-residue polypeptide: Glutamine synthetase (469 aa).

Residues 12-97 (HDVKWVDLRF…LVCDIIEPST (86 aa)) form the GS beta-grasp domain. In terms of domain architecture, GS catalytic spans 105 to 469 (PRNIAKRAEE…PLEYDLYYSV (365 aa)). Mg(2+)-binding residues include Glu130 and Glu132. Glu208 serves as a coordination point for ATP. Residues Glu213 and Glu221 each coordinate Mg(2+). L-glutamate contacts are provided by residues 265 to 266 (NG) and Gly266. His270 is a Mg(2+) binding site. Residues 272–274 (HMS) and Ser274 contribute to the ATP site. The L-glutamate site is built by Arg322, Glu328, and Arg340. 3 residues coordinate ATP: Arg340, Arg345, and Lys353. Glu358 is a binding site for Mg(2+). Arg360 serves as a coordination point for L-glutamate. Tyr398 is modified (O-AMP-tyrosine).

Belongs to the glutamine synthetase family. In terms of assembly, oligomer of 12 subunits arranged in the form of two hexameric ring. The cofactor is Mg(2+).

The protein resides in the cytoplasm. The catalysed reaction is L-glutamate + NH4(+) + ATP = L-glutamine + ADP + phosphate + H(+). The activity of this enzyme could be controlled by adenylation under conditions of abundant glutamine. Its function is as follows. Catalyzes the ATP-dependent biosynthesis of glutamine from glutamate and ammonia. This chain is Glutamine synthetase, found in Pseudomonas aeruginosa (strain ATCC 15692 / DSM 22644 / CIP 104116 / JCM 14847 / LMG 12228 / 1C / PRS 101 / PAO1).